Consider the following 488-residue polypeptide: Facilitated trehalose transporter Tret1-2 homolog (488 aa).

The Cytoplasmic segment spans residues 1-28 (MKILMRADTHVSYSVPAEGPKANFTFSQ). The helical transmembrane segment at 29–49 (VLAALSVSLCSLVVGFVSAYT) threads the bilayer. The Extracellular portion of the chain corresponds to 50-72 (SPALVSMTDRTITSFEVTKDAGS). Residues 73-93 (WVGGIMPLAALAGGITGGPLI) traverse the membrane as a helical segment. The Cytoplasmic portion of the chain corresponds to 94 to 105 (EYLGRRTTILAT). A helical transmembrane segment spans residues 106–126 (AVPFIVSSLLIACAVNVIMIL). Residues 127–129 (CGR) are Extracellular-facing. Residues 130–150 (FLTGFCVGIASLSLPVYLGET) traverse the membrane as a helical segment. At 151-160 (LQPEVRGTLG) the chain is on the cytoplasmic side. The helical transmembrane segment at 161 to 181 (LLPTALGNIGILVCYVAGSFM) threads the bilayer. N-linked (GlcNAc...) asparagine glycosylation is present at Asn-182. Over 182-184 (NWS) the chain is Extracellular. The chain crosses the membrane as a helical span at residues 185-205 (MLAFLGAALPVPFLILMIIIP). Residues 206–268 (ETPRWFVNRG…ELFKRINLKP (63 aa)) lie on the Cytoplasmic side of the membrane. Residues 269–289 (LSISLGLMFFQQFSGINAVIF) traverse the membrane as a helical segment. Residues 290–305 (YTVQIFKDAGSTIDSN) lie on the Extracellular side of the membrane. The chain crosses the membrane as a helical span at residues 306 to 326 (LCTIIVGIVNFFATFMGILLI). Topologically, residues 327-332 (DRLGRK) are cytoplasmic. Residues 333–353 (ILLYISDIAMILTLSILGGFF) traverse the membrane as a helical segment. Residues 354 to 372 (YCKAHGPDVSHLGWLPLTC) are Extracellular-facing. The chain crosses the membrane as a helical span at residues 373–393 (FVIYILGFSLGFGPIPWLMMG). The Cytoplasmic segment spans residues 394 to 402 (EILPAKIRG). A helical transmembrane segment spans residues 403–423 (PAASVVTAFNWFCTFVVTKTF). At 424-433 (QDLTVAMGAH) the chain is on the extracellular side. The helical transmembrane segment at 434 to 454 (GAFWLFGVVCIVGLFFVIICV) threads the bilayer. Residues 455-488 (PETRGKSLEEIERKMMGRVPISAVVNIKPFSFNM) lie on the Cytoplasmic side of the membrane.

Belongs to the major facilitator superfamily. Sugar transporter (TC 2.A.1.1) family. Trehalose transporter subfamily.

Its subcellular location is the cell membrane. Functionally, fails to transport trehalose. This chain is Facilitated trehalose transporter Tret1-2 homolog, found in Drosophila simulans (Fruit fly).